Reading from the N-terminus, the 359-residue chain is Alanine racemase (359 aa).

Lys-35 functions as the Proton acceptor; specific for D-alanine in the catalytic mechanism. Lys-35 bears the N6-(pyridoxal phosphate)lysine mark. Arg-130 contacts substrate. Catalysis depends on Tyr-255, which acts as the Proton acceptor; specific for L-alanine. A substrate-binding site is contributed by Met-303.

It belongs to the alanine racemase family. The cofactor is pyridoxal 5'-phosphate.

The catalysed reaction is L-alanine = D-alanine. It functions in the pathway amino-acid biosynthesis; D-alanine biosynthesis; D-alanine from L-alanine: step 1/1. Catalyzes the interconversion of L-alanine and D-alanine. May also act on other amino acids. This is Alanine racemase (alr) from Janthinobacterium sp. (strain Marseille) (Minibacterium massiliensis).